A 293-amino-acid chain; its full sequence is Foldase protein PrsA 2 (293 aa).

A signal peptide spans 1-20 (MKKKLILGLVMMMALFSLAA). Cys21 carries N-palmitoyl cysteine lipidation. A lipid anchor (S-diacylglycerol cysteine) is attached at Cys21. A PpiC domain is found at 135-226 (QPDITVSHIL…YGYHIIQMDK (92 aa)).

This sequence belongs to the PrsA family.

It localises to the cell membrane. It carries out the reaction [protein]-peptidylproline (omega=180) = [protein]-peptidylproline (omega=0). In terms of biological role, plays a major role in protein secretion by helping the post-translocational extracellular folding of several secreted proteins. This is Foldase protein PrsA 2 from Listeria monocytogenes serotype 4b (strain F2365).